A 249-amino-acid polypeptide reads, in one-letter code: 2,3-bisphosphoglycerate-dependent phosphoglycerate mutase (249 aa).

Residues 11–18 (RHGNSEWN), 24–25 (TG), arginine 63, 90–93 (ERHY), lysine 101, 117–118 (RR), and 185–186 (GN) contribute to the substrate site. Catalysis depends on histidine 12, which acts as the Tele-phosphohistidine intermediate. Glutamate 90 serves as the catalytic Proton donor/acceptor.

It belongs to the phosphoglycerate mutase family. BPG-dependent PGAM subfamily.

It carries out the reaction (2R)-2-phosphoglycerate = (2R)-3-phosphoglycerate. The protein operates within carbohydrate degradation; glycolysis; pyruvate from D-glyceraldehyde 3-phosphate: step 3/5. In terms of biological role, catalyzes the interconversion of 2-phosphoglycerate and 3-phosphoglycerate. This Leifsonia xyli subsp. xyli (strain CTCB07) protein is 2,3-bisphosphoglycerate-dependent phosphoglycerate mutase.